A 221-amino-acid chain; its full sequence is Ribosomal RNA small subunit methyltransferase G (221 aa).

S-adenosyl-L-methionine-binding positions include glycine 90, leucine 95, 141 to 142, and arginine 154; that span reads VE.

This sequence belongs to the methyltransferase superfamily. RNA methyltransferase RsmG family.

Its subcellular location is the cytoplasm. The catalysed reaction is guanosine(527) in 16S rRNA + S-adenosyl-L-methionine = N(7)-methylguanosine(527) in 16S rRNA + S-adenosyl-L-homocysteine. Functionally, specifically methylates the N7 position of guanine in position 527 of 16S rRNA. This Polaromonas naphthalenivorans (strain CJ2) protein is Ribosomal RNA small subunit methyltransferase G.